A 201-amino-acid polypeptide reads, in one-letter code: Peptidyl-prolyl cis-trans isomerase FKBP11 (201 aa).

A signal peptide spans 1–27 (MTLRPSLLPLHLLLLLLLSAAVCRAEA). The 88-residue stretch at 57–144 (GDTLHIHYTG…QYDVELIALI (88 aa)) folds into the PPIase FKBP-type domain. Residues 156 to 176 (ILPLVGMAMVPALLGLIGYHL) form a helical membrane-spanning segment.

It belongs to the FKBP-type PPIase family. Interacts with IFITM5.

The protein resides in the membrane. The catalysed reaction is [protein]-peptidylproline (omega=180) = [protein]-peptidylproline (omega=0). Its function is as follows. PPIases accelerate the folding of proteins during protein synthesis. This is Peptidyl-prolyl cis-trans isomerase FKBP11 (FKBP11) from Homo sapiens (Human).